Reading from the N-terminus, the 331-residue chain is Glyceraldehyde-3-phosphate dehydrogenase (331 aa).

Residues 12–13, Asp34, Arg78, and Thr120 each bind NAD(+); that span reads RI. D-glyceraldehyde 3-phosphate-binding positions include 149-151, Thr180, 209-210, and Arg232; these read SCT and TG. The active-site Nucleophile is the Cys150. Asn314 provides a ligand contact to NAD(+).

It belongs to the glyceraldehyde-3-phosphate dehydrogenase family. Homotetramer.

Its subcellular location is the cytoplasm. It catalyses the reaction D-glyceraldehyde 3-phosphate + phosphate + NAD(+) = (2R)-3-phospho-glyceroyl phosphate + NADH + H(+). The protein operates within carbohydrate degradation; glycolysis; pyruvate from D-glyceraldehyde 3-phosphate: step 1/5. Functionally, catalyzes the oxidative phosphorylation of glyceraldehyde 3-phosphate (G3P) to 1,3-bisphosphoglycerate (BPG) using the cofactor NAD. The first reaction step involves the formation of a hemiacetal intermediate between G3P and a cysteine residue, and this hemiacetal intermediate is then oxidized to a thioester, with concomitant reduction of NAD to NADH. The reduced NADH is then exchanged with the second NAD, and the thioester is attacked by a nucleophilic inorganic phosphate to produce BPG. The chain is Glyceraldehyde-3-phosphate dehydrogenase (gapA) from Shimwellia blattae (strain ATCC 29907 / DSM 4481 / JCM 1650 / NBRC 105725 / CDC 9005-74) (Escherichia blattae).